The following is a 234-amino-acid chain: Carboxy-S-adenosyl-L-methionine synthase (234 aa).

S-adenosyl-L-methionine contacts are provided by residues Tyr35, 60 to 62, 83 to 84, Asn124, and Arg191; these read GSS and DN.

Belongs to the class I-like SAM-binding methyltransferase superfamily. Cx-SAM synthase family. As to quaternary structure, homodimer.

The catalysed reaction is prephenate + S-adenosyl-L-methionine = carboxy-S-adenosyl-L-methionine + 3-phenylpyruvate + H2O. Its function is as follows. Catalyzes the conversion of S-adenosyl-L-methionine (SAM) to carboxy-S-adenosyl-L-methionine (Cx-SAM). This chain is Carboxy-S-adenosyl-L-methionine synthase, found in Nautilia profundicola (strain ATCC BAA-1463 / DSM 18972 / AmH).